A 334-amino-acid polypeptide reads, in one-letter code: Glycerol-3-phosphate dehydrogenase [NAD(P)+] (334 aa).

NADPH contacts are provided by Trp-13, Arg-33, and Lys-106. Sn-glycerol 3-phosphate-binding residues include Lys-106, Gly-137, and Ser-139. Ala-141 contacts NADPH. Residues Lys-192, Asp-245, Ser-255, Arg-256, and Asn-257 each contribute to the sn-glycerol 3-phosphate site. Lys-192 serves as the catalytic Proton acceptor. Arg-256 serves as a coordination point for NADPH. Residues Val-280 and Glu-282 each contribute to the NADPH site.

Belongs to the NAD-dependent glycerol-3-phosphate dehydrogenase family.

Its subcellular location is the cytoplasm. The enzyme catalyses sn-glycerol 3-phosphate + NAD(+) = dihydroxyacetone phosphate + NADH + H(+). It catalyses the reaction sn-glycerol 3-phosphate + NADP(+) = dihydroxyacetone phosphate + NADPH + H(+). It participates in membrane lipid metabolism; glycerophospholipid metabolism. Functionally, catalyzes the reduction of the glycolytic intermediate dihydroxyacetone phosphate (DHAP) to sn-glycerol 3-phosphate (G3P), the key precursor for phospholipid synthesis. In Chlamydia felis (strain Fe/C-56) (Chlamydophila felis), this protein is Glycerol-3-phosphate dehydrogenase [NAD(P)+].